The chain runs to 178 residues: FXYD domain-containing ion transport regulator 5 (178 aa).

Positions 1 to 21 (MSPPSQLCLLTIVALILPSEG) are cleaved as a signal peptide. A disordered region spans residues 21–126 (GQTPEKPRSS…YMPPSYIENP (106 aa)). The Extracellular segment spans residues 22–146 (QTPEKPRSSF…YDNTTLRKRG (125 aa)). Over residues 29–58 (SSFTAHQSSVTTHVPVPDQTSPGVQTTPPI) the composition is skewed to polar residues. Low complexity predominate over residues 70-79 (QTAAKTKTQQ). A helical membrane pass occupies residues 147–164 (LLVAAVLFITGIIILTSG). Residues 165-178 (KCRQFSQLCLNRHR) are Cytoplasmic-facing.

The protein belongs to the FXYD family. Regulatory subunit of the sodium/potassium-transporting ATPase which is composed of a catalytic alpha subunit, a non-catalytic beta subunit and an additional regulatory subunit. The regulatory subunit, a member of the FXYD protein family, modulates the enzymatic activity in a tissue- and isoform-specific way by changing affinities of the Na+/K+-ATPase toward Na(+), K(+) or ATP. Post-translationally, glycosylated. As to expression, spleen, lung, skeletal muscle, and testis.

Its subcellular location is the cell membrane. The protein localises to the basolateral cell membrane. Functionally, associates with and regulates the activity of the sodium/potassium-transporting ATPase (NKA) which catalyzes the hydrolysis of ATP coupled with the exchange of Na(+) and K(+) ions across the plasma membrane. May increase NKA activity by increasing the apparent affinity for Na(+). Involved in down-regulation of E-cadherin which results in reduced cell adhesion. Promotes metastasis. The polypeptide is FXYD domain-containing ion transport regulator 5 (Fxyd5) (Rattus norvegicus (Rat)).